A 149-amino-acid polypeptide reads, in one-letter code: Large ribosomal subunit protein bL9 (149 aa).

Belongs to the bacterial ribosomal protein bL9 family.

Its function is as follows. Binds to the 23S rRNA. This is Large ribosomal subunit protein bL9 from Syntrophus aciditrophicus (strain SB).